A 102-amino-acid polypeptide reads, in one-letter code: RNA-binding protein Hfq (102 aa).

The 60-residue stretch at 9-68 (DPFLNALRRERVPVSIYLVNGIKLQGQIESFDQFVILLKNTVSQMVYKHAISTVVPSRPV) folds into the Sm domain. Residues 64-102 (PSRPVSHHSNTPSGGTSNYHHGNNPSAPQQPQQESDDAE) form a disordered region. The span at 70-96 (HHSNTPSGGTSNYHHGNNPSAPQQPQQ) shows a compositional bias: polar residues.

The protein belongs to the Hfq family. Homohexamer.

In terms of biological role, RNA chaperone that binds small regulatory RNA (sRNAs) and mRNAs to facilitate mRNA translational regulation in response to envelope stress, environmental stress and changes in metabolite concentrations. Also binds with high specificity to tRNAs. The polypeptide is RNA-binding protein Hfq (Serratia proteamaculans (strain 568)).